Consider the following 416-residue polypeptide: Glutamyl-tRNA reductase (416 aa).

Residues 49–52 (TCNR), Ser-105, 110–112 (EPQ), and Gln-116 contribute to the substrate site. Residue Cys-50 is the Nucleophile of the active site. 185–190 (GAGETI) contributes to the NADP(+) binding site.

Belongs to the glutamyl-tRNA reductase family. As to quaternary structure, homodimer.

The catalysed reaction is (S)-4-amino-5-oxopentanoate + tRNA(Glu) + NADP(+) = L-glutamyl-tRNA(Glu) + NADPH + H(+). It functions in the pathway porphyrin-containing compound metabolism; protoporphyrin-IX biosynthesis; 5-aminolevulinate from L-glutamyl-tRNA(Glu): step 1/2. Functionally, catalyzes the NADPH-dependent reduction of glutamyl-tRNA(Glu) to glutamate 1-semialdehyde (GSA). In Shewanella piezotolerans (strain WP3 / JCM 13877), this protein is Glutamyl-tRNA reductase.